Consider the following 687-residue polypeptide: Glycine--tRNA ligase beta subunit (687 aa).

Belongs to the class-II aminoacyl-tRNA synthetase family. As to quaternary structure, tetramer of two alpha and two beta subunits.

The protein localises to the cytoplasm. The catalysed reaction is tRNA(Gly) + glycine + ATP = glycyl-tRNA(Gly) + AMP + diphosphate. This is Glycine--tRNA ligase beta subunit from Neisseria gonorrhoeae (strain NCCP11945).